The following is a 108-amino-acid chain: MLDKKFHVKKGDTVSVIAGKDKSKTGKVIRILPKKDGVLVEGLNMVKRHMRARGNEPGGIVEKENPLHVSNVMLYCDKCKKPVRSKMNVLEDGKKVRVCIKCGDSFDK.

This sequence belongs to the universal ribosomal protein uL24 family. In terms of assembly, part of the 50S ribosomal subunit.

One of two assembly initiator proteins, it binds directly to the 5'-end of the 23S rRNA, where it nucleates assembly of the 50S subunit. Its function is as follows. One of the proteins that surrounds the polypeptide exit tunnel on the outside of the subunit. In Geobacter metallireducens (strain ATCC 53774 / DSM 7210 / GS-15), this protein is Large ribosomal subunit protein uL24.